A 59-amino-acid polypeptide reads, in one-letter code: Large ribosomal subunit protein bL32 (59 aa).

Residues 1–20 are disordered; that stretch reads MAVQQNKKSRSRKGMRRSHD. The span at 7–19 shows a compositional bias: basic residues; it reads KKSRSRKGMRRSH.

It belongs to the bacterial ribosomal protein bL32 family.

This chain is Large ribosomal subunit protein bL32, found in Nitratidesulfovibrio vulgaris (strain ATCC 29579 / DSM 644 / CCUG 34227 / NCIMB 8303 / VKM B-1760 / Hildenborough) (Desulfovibrio vulgaris).